The chain runs to 99 residues: Aspartyl/glutamyl-tRNA(Asn/Gln) amidotransferase subunit C (99 aa).

This sequence belongs to the GatC family. In terms of assembly, heterotrimer of A, B and C subunits.

It carries out the reaction L-glutamyl-tRNA(Gln) + L-glutamine + ATP + H2O = L-glutaminyl-tRNA(Gln) + L-glutamate + ADP + phosphate + H(+). It catalyses the reaction L-aspartyl-tRNA(Asn) + L-glutamine + ATP + H2O = L-asparaginyl-tRNA(Asn) + L-glutamate + ADP + phosphate + 2 H(+). Its function is as follows. Allows the formation of correctly charged Asn-tRNA(Asn) or Gln-tRNA(Gln) through the transamidation of misacylated Asp-tRNA(Asn) or Glu-tRNA(Gln) in organisms which lack either or both of asparaginyl-tRNA or glutaminyl-tRNA synthetases. The reaction takes place in the presence of glutamine and ATP through an activated phospho-Asp-tRNA(Asn) or phospho-Glu-tRNA(Gln). This chain is Aspartyl/glutamyl-tRNA(Asn/Gln) amidotransferase subunit C, found in Kineococcus radiotolerans (strain ATCC BAA-149 / DSM 14245 / SRS30216).